Here is a 654-residue protein sequence, read N- to C-terminus: Polyvinylalcohol dehydrogenase (654 aa).

Positions 1–32 (MGSHAWGGAVFSAATLIAFGSVVHASGTVAET) are cleaved as a signal peptide. A Cytochrome c domain is found at 42–159 (ADQLDGETLY…AANQWNGWST (118 aa)). Heme c is bound by residues cysteine 55, cysteine 58, and histidine 59.

It belongs to the bacterial PQQ dehydrogenase family. As to quaternary structure, monomer. Pyrroloquinoline quinone is required as a cofactor.

It is found in the periplasm. The enzyme catalyses a polyvinyl alcohol + 2n Fe(III)-[cytochrome c] = an oxidized polyvinyl alcohol + 2n Fe(II)-[cytochrome c] + 2n H(+). Catalyzes the oxidation of polyvinyl alcohol (PVA) in the polyvinyl alcohol degradation pathway. The sequence is that of Polyvinylalcohol dehydrogenase (pvadh) from Sphingopyxis sp. (strain 113P3).